Consider the following 622-residue polypeptide: Golgin subfamily A member 6-like protein 7 (622 aa).

3 disordered regions span residues 1 to 82 (MMSE…QQAL), 251 to 496 (RKHE…RKQV), and 511 to 580 (EKMQ…HDNR). Basic and acidic residues-rich tracts occupy residues 57-74 (SPEDKQQNRAQLKEENKA), 251-275 (RKHEEKMWRQEQRLRDQEKELREQE), 283-332 (EQMR…KQEE), 339-367 (EQMRKQEKQMLKQKEQMRKQEEQMWKQEE), 374-388 (EQMRKQEEQMWKQEE), and 395-420 (EQMRKQEEQMWKQEEQMGEQMRKQEE). Positions 100–534 (KTELETALHD…EKRREKKERM (435 aa)) form a coiled coil. Residues 477-489 (QMGEQEEQMGEQE) are compositionally biased toward acidic residues. 2 stretches are compositionally biased toward basic and acidic residues: residues 511–546 (EKMQEEEEKIRRQVEKRREKKERMGEQEKTQEERCS) and 567–580 (PAREAGKGYSHDNR).

This sequence belongs to the GOLGA6 family.

The polypeptide is Golgin subfamily A member 6-like protein 7 (Homo sapiens (Human)).